A 484-amino-acid chain; its full sequence is tRNA sulfurtransferase (484 aa).

The THUMP domain maps to E63–R167. ATP-binding positions include L185–I186, K267, G289, and Q298. A disulfide bond links C346 and C458. In terms of domain architecture, Rhodanese spans I406–P484. C458 (cysteine persulfide intermediate) is an active-site residue.

Belongs to the ThiI family.

It is found in the cytoplasm. The enzyme catalyses [ThiI sulfur-carrier protein]-S-sulfanyl-L-cysteine + a uridine in tRNA + 2 reduced [2Fe-2S]-[ferredoxin] + ATP + H(+) = [ThiI sulfur-carrier protein]-L-cysteine + a 4-thiouridine in tRNA + 2 oxidized [2Fe-2S]-[ferredoxin] + AMP + diphosphate. It carries out the reaction [ThiS sulfur-carrier protein]-C-terminal Gly-Gly-AMP + S-sulfanyl-L-cysteinyl-[cysteine desulfurase] + AH2 = [ThiS sulfur-carrier protein]-C-terminal-Gly-aminoethanethioate + L-cysteinyl-[cysteine desulfurase] + A + AMP + 2 H(+). It functions in the pathway cofactor biosynthesis; thiamine diphosphate biosynthesis. Its function is as follows. Catalyzes the ATP-dependent transfer of a sulfur to tRNA to produce 4-thiouridine in position 8 of tRNAs, which functions as a near-UV photosensor. Also catalyzes the transfer of sulfur to the sulfur carrier protein ThiS, forming ThiS-thiocarboxylate. This is a step in the synthesis of thiazole, in the thiamine biosynthesis pathway. The sulfur is donated as persulfide by IscS. This chain is tRNA sulfurtransferase, found in Shewanella piezotolerans (strain WP3 / JCM 13877).